Here is a 404-residue protein sequence, read N- to C-terminus: Cysteine desulfurase IscS (404 aa).

Pyridoxal 5'-phosphate contacts are provided by residues 75-76, Asn-155, Gln-183, and 203-205; these read AT and SGH. Lys-206 is subject to N6-(pyridoxal phosphate)lysine. Position 243 (Thr-243) interacts with pyridoxal 5'-phosphate. The active-site Cysteine persulfide intermediate is the Cys-328. Cys-328 is a [2Fe-2S] cluster binding site.

Belongs to the class-V pyridoxal-phosphate-dependent aminotransferase family. NifS/IscS subfamily. In terms of assembly, homodimer. Forms a heterotetramer with IscU, interacts with other sulfur acceptors. Pyridoxal 5'-phosphate serves as cofactor.

It localises to the cytoplasm. The enzyme catalyses (sulfur carrier)-H + L-cysteine = (sulfur carrier)-SH + L-alanine. Its pathway is cofactor biosynthesis; iron-sulfur cluster biosynthesis. In terms of biological role, master enzyme that delivers sulfur to a number of partners involved in Fe-S cluster assembly, tRNA modification or cofactor biosynthesis. Catalyzes the removal of elemental sulfur atoms from cysteine to produce alanine. Functions as a sulfur delivery protein for Fe-S cluster synthesis onto IscU, an Fe-S scaffold assembly protein, as well as other S acceptor proteins. This is Cysteine desulfurase IscS from Shewanella baltica (strain OS155 / ATCC BAA-1091).